Consider the following 228-residue polypeptide: 3-dehydroquinate dehydratase (228 aa).

3-dehydroquinate is bound by residues 30–32 (EWR) and Arg-62. Catalysis depends on His-118, which acts as the Proton donor/acceptor. Lys-143 (schiff-base intermediate with substrate) is an active-site residue. 3-dehydroquinate contacts are provided by Arg-186, Ser-205, and Gln-209.

Belongs to the type-I 3-dehydroquinase family. Homodimer.

It catalyses the reaction 3-dehydroquinate = 3-dehydroshikimate + H2O. It functions in the pathway metabolic intermediate biosynthesis; chorismate biosynthesis; chorismate from D-erythrose 4-phosphate and phosphoenolpyruvate: step 3/7. In terms of biological role, involved in the third step of the chorismate pathway, which leads to the biosynthesis of aromatic amino acids. Catalyzes the cis-dehydration of 3-dehydroquinate (DHQ) and introduces the first double bond of the aromatic ring to yield 3-dehydroshikimate. The chain is 3-dehydroquinate dehydratase from Streptococcus pyogenes serotype M12 (strain MGAS9429).